A 522-amino-acid chain; its full sequence is 2-isopropylmalate synthase (522 aa).

A Pyruvate carboxyltransferase domain is found at 5 to 267 (VIIFDTTLRD…YTNINAREIH (263 aa)). The Mn(2+) site is built by Asp14, His202, His204, and Asn238. Residues 392–522 (VMEQLVVQSD…MQQTRELGGV (131 aa)) form a regulatory domain region.

Belongs to the alpha-IPM synthase/homocitrate synthase family. LeuA type 1 subfamily. Homodimer. The cofactor is Mn(2+).

It is found in the cytoplasm. It catalyses the reaction 3-methyl-2-oxobutanoate + acetyl-CoA + H2O = (2S)-2-isopropylmalate + CoA + H(+). It functions in the pathway amino-acid biosynthesis; L-leucine biosynthesis; L-leucine from 3-methyl-2-oxobutanoate: step 1/4. In terms of biological role, catalyzes the condensation of the acetyl group of acetyl-CoA with 3-methyl-2-oxobutanoate (2-ketoisovalerate) to form 3-carboxy-3-hydroxy-4-methylpentanoate (2-isopropylmalate). In Shewanella amazonensis (strain ATCC BAA-1098 / SB2B), this protein is 2-isopropylmalate synthase.